Consider the following 599-residue polypeptide: Aspartate--tRNA(Asp/Asn) ligase (599 aa).

Glu-174 is a binding site for L-aspartate. The tract at residues 198-201 is aspartate; sequence QLFK. Arg-220 provides a ligand contact to L-aspartate. ATP is bound by residues 220–222 and Gln-229; that span reads RDE. His-457 lines the L-aspartate pocket. Residue Glu-491 participates in ATP binding. Arg-498 serves as a coordination point for L-aspartate. An ATP-binding site is contributed by 543–546; that stretch reads GLDR.

This sequence belongs to the class-II aminoacyl-tRNA synthetase family. Type 1 subfamily. As to quaternary structure, homodimer.

It is found in the cytoplasm. The catalysed reaction is tRNA(Asx) + L-aspartate + ATP = L-aspartyl-tRNA(Asx) + AMP + diphosphate. Its function is as follows. Aspartyl-tRNA synthetase with relaxed tRNA specificity since it is able to aspartylate not only its cognate tRNA(Asp) but also tRNA(Asn). Reaction proceeds in two steps: L-aspartate is first activated by ATP to form Asp-AMP and then transferred to the acceptor end of tRNA(Asp/Asn). The protein is Aspartate--tRNA(Asp/Asn) ligase of Paraburkholderia xenovorans (strain LB400).